The sequence spans 643 residues: E3 ubiquitin-protein ligase AMFR (643 aa).

Transmembrane regions (helical) follow at residues 82–102, 122–142, 186–206, 215–235, 254–274, and 276–296; these read LFVW…AKLI, FWNF…VQTV, VLSL…VCCV, TLAF…HVIL, GTYV…LDLM, and HIHM…VIFM. The RING-type zinc-finger motif lies at 341 to 379; that stretch reads CAICWDSMQAARKLPCGHLFHNSCLRSWLEQDTSCPTCR. A helical transmembrane segment spans residues 429–449; that stretch reads IASWLPSFSVEVMHTTNILGI. Residues 456–498 form the CUE domain; the sequence is QLNAMAHQIQEMFPQVPYHLVLQDLQMTRSVEITTDNILEGRI. Residues 504 to 535 are disordered; it reads TQRSDSLRPALNSPVERPSPDLEEGEASVQTE. Residues serine 516 and serine 542 each carry the phosphoserine modification. Positions 598–624 are disordered; the sequence is LNKSSEDDGASERLLPSEGTSSDPVTL. Positions 622 to 640 are VCP/p97-interacting motif (VIM); the sequence is VTLRRRMLAAAAERRLQRQ.

Interacts with RNF5. Also forms an ERAD complex containing VCP/p97, NGLY1; PSMC1; SAKS1 and RAD23B required for coupling retrotranslocation, ubiquitination and deglycosylation. Interacts with DERL1. Interacts (through a region distinct from the RING finger) with UBE2G2/UBC7. Component of the VCP/p97-AMFR/gp78 complex that enhances VCP/p97 binding to polyubiquitinated proteins for their degradation by the endoplasmic reticulum-associated degradation (ERAD) pathway. Interacts (via the VIM) with VCP/p97. Interacts (via its membrane domain) with INSIG1; the interaction initiates the sterol-mediated ubiquitination and degradation of HMGCR by the ERAD pathway. Interacts with AUP1, UBE2G2 and RNF139/TRC8; interaction with AUP1 facilitates interaction of AMFR with ubiquitin-conjugating enzyme UBE2G2 and ubiquitin ligase RNF139, leading to sterol-induced ubiquitination of HNGCR and its subsequent proteasomal degradation. Interacts with BAG6. Interacts with USP13 (via UBA 2 domain); the interaction is direct. Interacts with LMBR1L, UBAC2 and CTNNB1. Interacts with C18orf32. Palmitoylation of the RING-type zing finger by ZDHHC6 promotes localization to the peripheral endoplasmic reticulum. In terms of tissue distribution, expressed in heart, brain, liver, lung, skeletal muscle, kidney and testis. Not detected in spleen.

It localises to the endoplasmic reticulum membrane. It catalyses the reaction [E2 ubiquitin-conjugating enzyme]-S-ubiquitinyl-L-cysteine + [acceptor protein]-L-cysteine = [E2 ubiquitin-conjugating enzyme]-L-cysteine + [acceptor protein]-S-ubiquitinyl-L-cysteine.. It functions in the pathway protein modification; protein ubiquitination. In terms of biological role, E3 ubiquitin-protein ligase that mediates the polyubiquitination of lysine and cysteine residues on target proteins, such as CD3D, CYP3A4, CFTR, INSIG1, SOAT2/ACAT2 and APOB for proteasomal degradation. Component of a VCP/p97-AMFR/gp78 complex that participates in the final step of endoplasmic reticulum-associated degradation (ERAD). The VCP/p97-AMFR/gp78 complex is involved in the sterol-accelerated ERAD degradation of HMGCR through binding to the HMGCR-INSIG1 complex at the ER membrane. In addition, interaction of AMFR with AUP1 facilitates interaction of AMFR with ubiquitin-conjugating enzyme UBE2G2 and ubiquitin ligase RNF139, leading to sterol-induced HMGCR ubiquitination. The ubiquitinated HMGCR is then released from the ER by the complex into the cytosol for subsequent destruction. In addition to ubiquitination on lysine residues, catalyzes ubiquitination on cysteine residues: together with INSIG1, mediates polyubiquitination of SOAT2/ACAT2 at 'Cys-277', leading to its degradation when the lipid levels are low. Catalyzes ubiquitination and subsequent degradation of INSIG1 when cells are depleted of sterols. Mediates polyubiquitination of INSIG2 at 'Cys-215' in some tissues, leading to its degradation. Also regulates ERAD through the ubiquitination of UBL4A a component of the BAG6/BAT3 complex. Also acts as a scaffold protein to assemble a complex that couples ubiquitination, retranslocation and deglycosylation. Mediates tumor invasion and metastasis as a receptor for the GPI/autocrine motility factor. In association with LMBR1L and UBAC2, negatively regulates the canonical Wnt signaling pathway in the lymphocytes by promoting the ubiquitin-mediated degradation of CTNNB1 and Wnt receptors FZD6 and LRP6. Regulates NF-kappa-B and MAPK signaling pathways by mediating 'Lys-27'-linked polyubiquitination of TAB3 and promoting subsequent TAK1/MAP3K7 activation. The sequence is that of E3 ubiquitin-protein ligase AMFR (Amfr) from Mus musculus (Mouse).